The sequence spans 765 residues: 5-methyltetrahydropteroyltriglutamate--homocysteine methyltransferase 1 (765 aa).

The 5-methyltetrahydropteroyltri-L-glutamate site is built by lysine 18 and asparagine 116. L-homocysteine is bound at residue 437 to 439; sequence IGS. Residues 437–439 and glutamate 490 contribute to the L-methionine site; that span reads IGS. Residues 521 to 522 and tryptophan 567 each bind 5-methyltetrahydropteroyltri-L-glutamate; that span reads RC. L-homocysteine is bound at residue aspartate 605. Aspartate 605 is an L-methionine binding site. Residues histidine 647, cysteine 649, histidine 658, aspartate 662, and glutamate 671 each coordinate Zn(2+). Histidine 701 serves as the catalytic Proton donor. Cysteine 733 contacts Zn(2+).

This sequence belongs to the vitamin-B12 independent methionine synthase family. The cofactor is Zn(2+). Expressed in leaves, stems, flowers, siliques and seeds.

The protein localises to the cytoplasm. Its subcellular location is the cytosol. It carries out the reaction 5-methyltetrahydropteroyltri-L-glutamate + L-homocysteine = tetrahydropteroyltri-L-glutamate + L-methionine. It participates in amino-acid biosynthesis; L-methionine biosynthesis via de novo pathway; L-methionine from L-homocysteine (MetE route): step 1/1. Its function is as follows. Catalyzes the transfer of a methyl group from 5-methyltetrahydrofolate to homocysteine resulting in methionine formation. The chain is 5-methyltetrahydropteroyltriglutamate--homocysteine methyltransferase 1 (MS1) from Arabidopsis thaliana (Mouse-ear cress).